The chain runs to 105 residues: Urease subunit beta (105 aa).

Belongs to the urease beta subunit family. Heterotrimer of UreA (gamma), UreB (beta) and UreC (alpha) subunits. Three heterotrimers associate to form the active enzyme.

The protein localises to the cytoplasm. It carries out the reaction urea + 2 H2O + H(+) = hydrogencarbonate + 2 NH4(+). The protein operates within nitrogen metabolism; urea degradation; CO(2) and NH(3) from urea (urease route): step 1/1. This Marinobacter nauticus (strain ATCC 700491 / DSM 11845 / VT8) (Marinobacter aquaeolei) protein is Urease subunit beta.